An 83-amino-acid chain; its full sequence is Small ribosomal subunit protein bS16 (83 aa).

It belongs to the bacterial ribosomal protein bS16 family.

The polypeptide is Small ribosomal subunit protein bS16 (Verminephrobacter eiseniae (strain EF01-2)).